Here is an 856-residue protein sequence, read N- to C-terminus: DNA mismatch repair protein MutS (856 aa).

ATP is bound at residue 607–614; it reads GPNMSGKS.

This sequence belongs to the DNA mismatch repair MutS family.

In terms of biological role, this protein is involved in the repair of mismatches in DNA. It is possible that it carries out the mismatch recognition step. This protein has a weak ATPase activity. The polypeptide is DNA mismatch repair protein MutS (Lactobacillus delbrueckii subsp. bulgaricus (strain ATCC 11842 / DSM 20081 / BCRC 10696 / JCM 1002 / NBRC 13953 / NCIMB 11778 / NCTC 12712 / WDCM 00102 / Lb 14)).